The chain runs to 64 residues: Prokaryotic ubiquitin-like protein Pup (64 aa).

Positions 1–37 are disordered; sequence MAQEQTQRAGGGEDDETTGGDGSAGQERREKLAAETD. Positions 21-58 are ARC ATPase binding; the sequence is DGSAGQERREKLAAETDDLLDEIDDVLEENAEDFVRAY. The stretch at 24-52 forms a coiled coil; sequence AGQERREKLAAETDDLLDEIDDVLEENAE. Position 64 is a deamidated glutamine (Gln-64). Residue Gln-64 forms an Isoglutamyl lysine isopeptide (Gln-Lys) (interchain with K-? in acceptor proteins) linkage.

Belongs to the prokaryotic ubiquitin-like protein family. In terms of assembly, strongly interacts with the proteasome-associated ATPase ARC through a hydrophobic interface; the interacting region of Pup lies in its C-terminal half. There is one Pup binding site per ARC hexamer ring. Is modified by deamidation of its C-terminal glutamine to glutamate by the deamidase Dop, a prerequisite to the subsequent pupylation process.

It functions in the pathway protein degradation; proteasomal Pup-dependent pathway. Protein modifier that is covalently attached to lysine residues of substrate proteins, thereby targeting them for proteasomal degradation. The tagging system is termed pupylation. The protein is Prokaryotic ubiquitin-like protein Pup of Rhodococcus erythropolis (strain PR4 / NBRC 100887).